The following is a 64-amino-acid chain: Alpha-conotoxin-like Lt1.3 (64 aa).

An N-terminal signal peptide occupies residues 1-21 (MGMRMMFTMFLLVVLTTTVVS). The propeptide occupies 22–45 (FNLDRESNHENRRTSNQITRGMWD). Intrachain disulfides connect cysteine 47/cysteine 53 and cysteine 48/cysteine 61. A lacks the Ser-Xaa-Pro motif that is crucial for potent interaction with nAChR region spans residues 49-51 (DDP).

Belongs to the conotoxin A superfamily. As to expression, expressed by the venom duct.

The protein localises to the secreted. In terms of biological role, alpha-conotoxins act on postsynaptic membranes, they bind to the nicotinic acetylcholine receptors (nAChR) and thus inhibit them. Has possibly a distinct nAChR binding mode from other alpha-conotoxins, due to a different three residue motif (lacks the Ser-Xaa-Pro motif). The sequence is that of Alpha-conotoxin-like Lt1.3 from Conus litteratus (Lettered cone).